Here is a 390-residue protein sequence, read N- to C-terminus: Leucine aminopeptidase 1 (390 aa).

The first 18 residues, 1 to 18, serve as a signal peptide directing secretion; sequence MKLSTALVLGATATGAWS. The propeptide occupies 19 to 90; that stretch reads YAIPQLEQEV…FPTLDAGSYV (72 aa). An N-linked (GlcNAc...) asparagine glycan is attached at asparagine 120. Residues histidine 190, aspartate 209, glutamate 248, and aspartate 275 each coordinate Zn(2+). Cysteine 324 and cysteine 328 are joined by a disulfide. Histidine 357 contacts Zn(2+).

This sequence belongs to the peptidase M28 family. M28E subfamily. Monomer. Zn(2+) is required as a cofactor.

It is found in the secreted. In terms of biological role, extracellular aminopeptidase that allows assimilation of proteinaceous substrates. The chain is Leucine aminopeptidase 1 (lap1) from Emericella nidulans (strain FGSC A4 / ATCC 38163 / CBS 112.46 / NRRL 194 / M139) (Aspergillus nidulans).